A 254-amino-acid chain; its full sequence is MHERNTTTNTPLDVTAQKLLVAQRSVDTLVQEGVLHAHMSIGLGTGSTAMPAVKRIADHLARGTLSDIAAVPTSFQTALICERYNIPLFSLSSKRIGGKLDVTIDGADEIDTQNFVIKGGGAALLQEKIAAYNSAHFVIIVDETKVVETLGTRAALPIEVVPEARMSVMRTLQDWGLSVHIREAVRKKGPVVTDHGNFILDARWQSLPTRTPQDMERALNALPGVIENGLFTERTVRVFVAHADGSVEERSASF.

Substrate is bound by residues 45–48, 105–108, and 118–121; these read TGST, DGAD, and KGGG. Residue E127 is the Proton acceptor of the active site. K145 provides a ligand contact to substrate.

Belongs to the ribose 5-phosphate isomerase family. As to quaternary structure, homodimer.

The catalysed reaction is aldehydo-D-ribose 5-phosphate = D-ribulose 5-phosphate. It participates in carbohydrate degradation; pentose phosphate pathway; D-ribose 5-phosphate from D-ribulose 5-phosphate (non-oxidative stage): step 1/1. Catalyzes the reversible conversion of ribose-5-phosphate to ribulose 5-phosphate. In Treponema pallidum subsp. pallidum (strain SS14), this protein is Ribose-5-phosphate isomerase A.